Reading from the N-terminus, the 204-residue chain is Large ribosomal subunit protein bL25 (204 aa).

It belongs to the bacterial ribosomal protein bL25 family. CTC subfamily. Part of the 50S ribosomal subunit; part of the 5S rRNA/L5/L18/L25 subcomplex. Contacts the 5S rRNA. Binds to the 5S rRNA independently of L5 and L18.

In terms of biological role, this is one of the proteins that binds to the 5S RNA in the ribosome where it forms part of the central protuberance. This chain is Large ribosomal subunit protein bL25, found in Pseudoalteromonas translucida (strain TAC 125).